Reading from the N-terminus, the 478-residue chain is ATP synthase subunit beta (478 aa).

ATP is bound at residue 155-162 (GGAGVGKT).

Belongs to the ATPase alpha/beta chains family. F-type ATPases have 2 components, CF(1) - the catalytic core - and CF(0) - the membrane proton channel. CF(1) has five subunits: alpha(3), beta(3), gamma(1), delta(1), epsilon(1). CF(0) has three main subunits: a(1), b(2) and c(9-12). The alpha and beta chains form an alternating ring which encloses part of the gamma chain. CF(1) is attached to CF(0) by a central stalk formed by the gamma and epsilon chains, while a peripheral stalk is formed by the delta and b chains.

The protein localises to the cell inner membrane. The enzyme catalyses ATP + H2O + 4 H(+)(in) = ADP + phosphate + 5 H(+)(out). Functionally, produces ATP from ADP in the presence of a proton gradient across the membrane. The catalytic sites are hosted primarily by the beta subunits. The chain is ATP synthase subunit beta from Fuscovulum blasticum (Rhodobacter blasticus).